We begin with the raw amino-acid sequence, 199 residues long: Holliday junction branch migration complex subunit RuvA (199 aa).

The tract at residues 1–64 is domain I; that stretch reads MIGRISGLLL…EDGHFLYGFA (64 aa). The interval 65–143 is domain II; it reads TDEERTAFRQ…KALPQVAGAR (79 aa). The segment at 144 to 154 is flexible linker; sequence LAAVAGGAPDA. The segment at 154 to 199 is domain III; it reads AKSDILNALLALGYNEKEALGAMKGLAEDTGVSDGIRQALKLLSKA.

This sequence belongs to the RuvA family. In terms of assembly, homotetramer. Forms an RuvA(8)-RuvB(12)-Holliday junction (HJ) complex. HJ DNA is sandwiched between 2 RuvA tetramers; dsDNA enters through RuvA and exits via RuvB. An RuvB hexamer assembles on each DNA strand where it exits the tetramer. Each RuvB hexamer is contacted by two RuvA subunits (via domain III) on 2 adjacent RuvB subunits; this complex drives branch migration. In the full resolvosome a probable DNA-RuvA(4)-RuvB(12)-RuvC(2) complex forms which resolves the HJ.

It localises to the cytoplasm. Functionally, the RuvA-RuvB-RuvC complex processes Holliday junction (HJ) DNA during genetic recombination and DNA repair, while the RuvA-RuvB complex plays an important role in the rescue of blocked DNA replication forks via replication fork reversal (RFR). RuvA specifically binds to HJ cruciform DNA, conferring on it an open structure. The RuvB hexamer acts as an ATP-dependent pump, pulling dsDNA into and through the RuvAB complex. HJ branch migration allows RuvC to scan DNA until it finds its consensus sequence, where it cleaves and resolves the cruciform DNA. This chain is Holliday junction branch migration complex subunit RuvA, found in Azoarcus sp. (strain BH72).